We begin with the raw amino-acid sequence, 268 residues long: Mesoderm posterior protein 1 (268 aa).

Residues 17–93 (AAWGPTRRPP…RQSASEREKL (77 aa)) form a disordered region. Positions 36 to 48 (LVSSPDSWGSTPA) are enriched in polar residues. Residues 66-86 (APSVGRRGARSSRLGSGQRQS) show a composition bias toward low complexity. Residues 82–136 (GQRQSASEREKLRMRTLARALHELRRFLPPSVAPAGQSLTKIETLRLAIRYIGHL) enclose the bHLH domain. The CPLCP signature appears at 163–167 (CPLCP). 2 tandem repeats follow at residues 182-183 (GQ) and 184-185 (GQ). Residues 182–185 (GQGQ) are 2 X 2 AA tandem repeats of G-Q.

The protein resides in the nucleus. Transcription factor. Plays a role in the epithelialization of somitic mesoderm and in the development of cardiac mesoderm. Defines the rostrocaudal patterning of the somites by participating in distinct Notch pathways. This is Mesoderm posterior protein 1 (MESP1) from Homo sapiens (Human).